Reading from the N-terminus, the 130-residue chain is Small ribosomal subunit protein uS11 (130 aa).

Belongs to the universal ribosomal protein uS11 family. As to quaternary structure, part of the 30S ribosomal subunit. Interacts with proteins S7 and S18. Binds to IF-3.

Its function is as follows. Located on the platform of the 30S subunit, it bridges several disparate RNA helices of the 16S rRNA. Forms part of the Shine-Dalgarno cleft in the 70S ribosome. This chain is Small ribosomal subunit protein uS11, found in Buchnera aphidicola subsp. Cinara cedri (strain Cc).